A 615-amino-acid chain; its full sequence is Chaperone protein DnaK (615 aa).

The residue at position 175 (threonine 175) is a Phosphothreonine; by autocatalysis. The tract at residues 573 to 615 (SQEMYQKAAQEQQAAQGAEQAQDNGPKDDNVVDADFKEVDEDK) is disordered. Residues 580–594 (AAQEQQAAQGAEQAQ) are compositionally biased toward low complexity. The segment covering 597–609 (GPKDDNVVDADFK) has biased composition (basic and acidic residues).

Belongs to the heat shock protein 70 family.

Functionally, acts as a chaperone. In Clostridioides difficile (strain 630) (Peptoclostridium difficile), this protein is Chaperone protein DnaK.